The primary structure comprises 468 residues: Fibrinogen beta chain (468 aa).

Q1 carries the post-translational modification Pyrrolidone carboxylic acid. A compositionally biased stretch (acidic residues) spans 1–10 (QFPTDYDEGQ). The disordered stretch occupies residues 1-54 (QFPTDYDEGQDDRPKVGLGARGHRPYDKKKEEAPSLRPVPPPISGGGYRARPAT). The O-linked (GalNAc...) threonine glycan is linked to T4. At Y6 the chain carries Sulfotyrosine. Positions 24–34 (RPYDKKKEEAP) are enriched in basic and acidic residues. A coiled-coil region spans residues 88–204 (KLQDTLVRQE…TQMEYCRTPC (117 aa)). 2 disulfides stabilise this stretch: C208–C293 and C218–C247. The Fibrinogen C-terminal domain occupies 209 to 465 (NIPVVSGKEC…KMSMKIRPYF (257 aa)). N371 carries an N-linked (GlcNAc...) asparagine glycan. Residues C401 and C414 are joined by a disulfide bond.

Heterohexamer; disulfide linked. Contains 2 sets of 3 non-identical chains (alpha, beta and gamma). The 2 heterotrimers are in head to head conformation with the N-termini in a small central domain. In terms of processing, conversion of fibrinogen to fibrin is triggered by thrombin, which cleaves fibrinopeptides A and B from alpha and beta chains, and thus exposes the N-terminal polymerization sites responsible for the formation of the soft clot. The soft clot is converted into the hard clot by factor XIIIA which catalyzes the epsilon-(gamma-glutamyl)lysine cross-linking between gamma chains (stronger) and between alpha chains (weaker) of different monomers. Detected in blood plasma (at protein level).

Its subcellular location is the secreted. Functionally, cleaved by the protease thrombin to yield monomers which, together with fibrinogen alpha (FGA) and fibrinogen gamma (FGG), polymerize to form an insoluble fibrin matrix. Fibrin has a major function in hemostasis as one of the primary components of blood clots. In addition, functions during the early stages of wound repair to stabilize the lesion and guide cell migration during re-epithelialization. Was originally thought to be essential for platelet aggregation, based on in vitro studies using anticoagulated blood. However subsequent studies have shown that it is not absolutely required for thrombus formation in vivo. Enhances expression of SELP in activated platelets. Maternal fibrinogen is essential for successful pregnancy. Fibrin deposition is also associated with infection, where it protects against IFNG-mediated hemorrhage. May also facilitate the antibacterial immune response via both innate and T-cell mediated pathways. The polypeptide is Fibrinogen beta chain (FGB) (Bos taurus (Bovine)).